The sequence spans 105 residues: ATP synthase subunit c (105 aa).

A run of 3 helical transmembrane segments spans residues 3–23 (FLALFFLALAGVAFAHDGGMG), 32–52 (SILGAMIGLGIAAFGGAIGMG), and 78–98 (VAMAMIEAQVIYTLVFAIIAI).

This sequence belongs to the ATPase C chain family. As to quaternary structure, F-type ATPases have 2 components, F(1) - the catalytic core - and F(0) - the membrane proton channel. F(1) has five subunits: alpha(3), beta(3), gamma(1), delta(1), epsilon(1). F(0) has three main subunits: a(1), b(2) and c(10-14). The alpha and beta chains form an alternating ring which encloses part of the gamma chain. F(1) is attached to F(0) by a central stalk formed by the gamma and epsilon chains, while a peripheral stalk is formed by the delta and b chains.

The protein localises to the cell inner membrane. In terms of biological role, f(1)F(0) ATP synthase produces ATP from ADP in the presence of a proton or sodium gradient. F-type ATPases consist of two structural domains, F(1) containing the extramembraneous catalytic core and F(0) containing the membrane proton channel, linked together by a central stalk and a peripheral stalk. During catalysis, ATP synthesis in the catalytic domain of F(1) is coupled via a rotary mechanism of the central stalk subunits to proton translocation. Its function is as follows. Key component of the F(0) channel; it plays a direct role in translocation across the membrane. A homomeric c-ring of between 10-14 subunits forms the central stalk rotor element with the F(1) delta and epsilon subunits. This chain is ATP synthase subunit c, found in Helicobacter pylori (strain P12).